Reading from the N-terminus, the 388-residue chain is Chorismate synthase (388 aa).

NADP(+)-binding residues include Arg-39 and Arg-45. FMN-binding positions include 130-132 (RSS), 251-252 (NA), Gly-296, 311-315 (KPIPT), and Arg-337.

The protein belongs to the chorismate synthase family. In terms of assembly, homotetramer. It depends on FMNH2 as a cofactor.

The enzyme catalyses 5-O-(1-carboxyvinyl)-3-phosphoshikimate = chorismate + phosphate. The protein operates within metabolic intermediate biosynthesis; chorismate biosynthesis; chorismate from D-erythrose 4-phosphate and phosphoenolpyruvate: step 7/7. Catalyzes the anti-1,4-elimination of the C-3 phosphate and the C-6 proR hydrogen from 5-enolpyruvylshikimate-3-phosphate (EPSP) to yield chorismate, which is the branch point compound that serves as the starting substrate for the three terminal pathways of aromatic amino acid biosynthesis. This reaction introduces a second double bond into the aromatic ring system. This is Chorismate synthase from Streptococcus pneumoniae (strain 70585).